Reading from the N-terminus, the 462-residue chain is Glutamate--tRNA ligase (462 aa).

The short motif at 11-21 (PSPTGFIHLGN) is the 'HIGH' region element. A 'KMSKS' region motif is present at residues 243-247 (KMSKR). Residue Lys246 coordinates ATP.

Belongs to the class-I aminoacyl-tRNA synthetase family. Glutamate--tRNA ligase type 1 subfamily. As to quaternary structure, monomer.

The protein localises to the cytoplasm. The enzyme catalyses tRNA(Glu) + L-glutamate + ATP = L-glutamyl-tRNA(Glu) + AMP + diphosphate. Catalyzes the attachment of glutamate to tRNA(Glu) in a two-step reaction: glutamate is first activated by ATP to form Glu-AMP and then transferred to the acceptor end of tRNA(Glu). This Albidiferax ferrireducens (strain ATCC BAA-621 / DSM 15236 / T118) (Rhodoferax ferrireducens) protein is Glutamate--tRNA ligase.